A 154-amino-acid chain; its full sequence is 6,7-dimethyl-8-ribityllumazine synthase (154 aa).

Residues phenylalanine 22, 56-58, and 80-82 each bind 5-amino-6-(D-ribitylamino)uracil; these read AFE and AVI. 85–86 provides a ligand contact to (2S)-2-hydroxy-3-oxobutyl phosphate; it reads ST. Histidine 88 acts as the Proton donor in catalysis. Residue phenylalanine 113 coordinates 5-amino-6-(D-ribitylamino)uracil. Arginine 127 is a binding site for (2S)-2-hydroxy-3-oxobutyl phosphate.

The protein belongs to the DMRL synthase family.

It catalyses the reaction (2S)-2-hydroxy-3-oxobutyl phosphate + 5-amino-6-(D-ribitylamino)uracil = 6,7-dimethyl-8-(1-D-ribityl)lumazine + phosphate + 2 H2O + H(+). It participates in cofactor biosynthesis; riboflavin biosynthesis; riboflavin from 2-hydroxy-3-oxobutyl phosphate and 5-amino-6-(D-ribitylamino)uracil: step 1/2. Its function is as follows. Catalyzes the formation of 6,7-dimethyl-8-ribityllumazine by condensation of 5-amino-6-(D-ribitylamino)uracil with 3,4-dihydroxy-2-butanone 4-phosphate. This is the penultimate step in the biosynthesis of riboflavin. This is 6,7-dimethyl-8-ribityllumazine synthase from Clostridium kluyveri (strain NBRC 12016).